The primary structure comprises 82 residues: MNKQNLIDVEGSVTESLPNGMFRVRLDNGCQVPTHISGKIRRNHVRILPGDRVKVELSPYDLTKGRIIYRLRNKSSNDWITS.

The S1-like domain occupies 1-72 (MNKQNLIDVE…TKGRIIYRLR (72 aa)).

The protein belongs to the IF-1 family. Component of the 30S ribosomal translation pre-initiation complex which assembles on the 30S ribosome in the order IF-2 and IF-3, IF-1 and N-formylmethionyl-tRNA(fMet); mRNA recruitment can occur at any time during PIC assembly.

The protein resides in the plastid. Its subcellular location is the chloroplast. Its function is as follows. One of the essential components for the initiation of protein synthesis. Stabilizes the binding of IF-2 and IF-3 on the 30S subunit to which N-formylmethionyl-tRNA(fMet) subsequently binds. Helps modulate mRNA selection, yielding the 30S pre-initiation complex (PIC). Upon addition of the 50S ribosomal subunit IF-1, IF-2 and IF-3 are released leaving the mature 70S translation initiation complex. This is Translation initiation factor IF-1, chloroplastic from Cycas taitungensis (Prince sago).